Consider the following 809-residue polypeptide: Ecotropic viral integration site 5 protein (809 aa).

Residues Met-1–Glu-483 are interaction with alpha-tubulin, gamma-tubulin, BIRC5 and FBXO5. Disordered regions lie at residues Val-49–Pro-80 and Asp-99–Ala-123. Residues Ser-51 to Leu-78 show a composition bias toward low complexity. Phosphoserine occurs at positions 102 and 113. Residues Leu-103–Ala-123 show a composition bias toward low complexity. The tract at residues Ser-128–Ile-693 is dimerization. The 186-residue stretch at Gly-163–Gly-348 folds into the Rab-GAP TBC domain. The interval Gln-377–Val-809 is targeting to the centrosomes. Residues Lys-406–Ser-717 adopt a coiled-coil conformation. An interaction with AURKB and INCENP region spans residues Lys-487–Val-809. Ser-497, Ser-689, Ser-776, and Ser-778 each carry phosphoserine. Residues His-760–Val-809 are disordered. A compositionally biased stretch (polar residues) spans Pro-799 to Val-809.

As to quaternary structure, dimeric and monomeric. Interacts with alpha- and gamma-tubulin. Interacts with FBXO5. Interacts with the chromosome passenger complex (CPC) which is at least composed of AURKB/aurora-B, BIRC5/survivin, CDCA8/borealin and INCENP. Post-translationally, probably phosphorylated by PLK1; may be required for degradation during mitosis. In terms of processing, ubiquitinated. Degradation during prophase is ubiquitin-dependent. As to expression, widely expressed.

It localises to the nucleus. It is found in the cytoplasm. The protein resides in the cytoskeleton. The protein localises to the microtubule organizing center. Its subcellular location is the centrosome. It localises to the spindle. Functions as a regulator of cell cycle progression by stabilizing the FBXO5 protein and promoting cyclin-A accumulation during interphase. May play a role in cytokinesis. This Mus musculus (Mouse) protein is Ecotropic viral integration site 5 protein (Evi5).